Consider the following 505-residue polypeptide: Betaine aldehyde dehydrogenase (505 aa).

An NAD(+)-binding site is contributed by 239–244; the sequence is GSTATG. Glu-261 serves as the catalytic Proton acceptor. The active-site Nucleophile is Cys-296. The Microbody targeting signal signature appears at 503-505; the sequence is SKL.

Belongs to the aldehyde dehydrogenase family. Homodimer.

The protein resides in the peroxisome. It carries out the reaction betaine aldehyde + NAD(+) + H2O = glycine betaine + NADH + 2 H(+). It participates in amine and polyamine biosynthesis; betaine biosynthesis via choline pathway; betaine from betaine aldehyde: step 1/1. The protein is Betaine aldehyde dehydrogenase of Hordeum vulgare (Barley).